The sequence spans 158 residues: MIFVEKSFTHIEADRARMVDISEKNNVLRMARAAGEIVLSAETMEKIRTGTVEKGNVFATARVAAVLAVKKTPETIPMCHQIPITGIDVDLEIGKDSVSAVVEVRTVGKTGVEMEALTGVSVALLTVWDMVKSAEKDETGNYPHTLIRNIRVLEKLKG.

Substrate-binding positions include 78 to 80 (MCH) and 114 to 115 (ME). Residue aspartate 129 is part of the active site.

This sequence belongs to the MoaC family. In terms of assembly, homohexamer; trimer of dimers.

The catalysed reaction is (8S)-3',8-cyclo-7,8-dihydroguanosine 5'-triphosphate = cyclic pyranopterin phosphate + diphosphate. It participates in cofactor biosynthesis; molybdopterin biosynthesis. Its function is as follows. Catalyzes the conversion of (8S)-3',8-cyclo-7,8-dihydroguanosine 5'-triphosphate to cyclic pyranopterin monophosphate (cPMP). The polypeptide is Probable cyclic pyranopterin monophosphate synthase (Methanosarcina acetivorans (strain ATCC 35395 / DSM 2834 / JCM 12185 / C2A)).